The following is a 414-amino-acid chain: MKTSTKTFAIADTAANADYLTNTSEPLGETMTLNVGPSHPATHGVLRLVLELDGEEIISCDPVVGHLHRGMEKIGETIQYNQFVPYTDRFDYLAPLSNNIAYACAVEKLLGWELPPRGQALRVLALELSRFSSHILGVGVYGMDVGAMTVFLYCYEEREKIHNFYEQLTGARFTSSYTRIGGQTRDVPNEMLKEVLVFCDEAAKTLDETEALLLKNKIFIDRLQGVGVISREKALSWGITGANLRASGIKRDLRKLTPYLGYENYEFDVPVGEHGDCYDRFTVRIEEMRQSLRIIRQVIETMPDGPINMVDTKGTLPEKKKVLTDMESLIRQFMTTTMGVNAPAGQVYFAAENPKGELGFFLDSKGGGLPNRLRMRSPSFCNLSILPELMKGHLVSDVPAILGSFDFVMGECDR.

It belongs to the complex I 49 kDa subunit family. As to quaternary structure, NDH-1 is composed of 14 different subunits. Subunits NuoB, C, D, E, F, and G constitute the peripheral sector of the complex.

It is found in the cell inner membrane. It carries out the reaction a quinone + NADH + 5 H(+)(in) = a quinol + NAD(+) + 4 H(+)(out). In terms of biological role, NDH-1 shuttles electrons from NADH, via FMN and iron-sulfur (Fe-S) centers, to quinones in the respiratory chain. The immediate electron acceptor for the enzyme in this species is believed to be ubiquinone. Couples the redox reaction to proton translocation (for every two electrons transferred, four hydrogen ions are translocated across the cytoplasmic membrane), and thus conserves the redox energy in a proton gradient. The polypeptide is NADH-quinone oxidoreductase subunit D (Akkermansia muciniphila (strain ATCC BAA-835 / DSM 22959 / JCM 33894 / BCRC 81048 / CCUG 64013 / CIP 107961 / Muc)).